Consider the following 338-residue polypeptide: Holliday junction branch migration complex subunit RuvB (338 aa).

Positions M1–I22 are disordered. Residues A4–Y187 are large ATPase domain (RuvB-L). Residues R27, G68, K71, T72, T73, E134–Y136, R177, Y187, and R224 each bind ATP. T72 provides a ligand contact to Mg(2+). The interval N188–D258 is small ATPAse domain (RuvB-S). The head domain (RuvB-H) stretch occupies residues S261–K338. Residues R297, R316, and R321 each contribute to the DNA site.

This sequence belongs to the RuvB family. As to quaternary structure, homohexamer. Forms an RuvA(8)-RuvB(12)-Holliday junction (HJ) complex. HJ DNA is sandwiched between 2 RuvA tetramers; dsDNA enters through RuvA and exits via RuvB. An RuvB hexamer assembles on each DNA strand where it exits the tetramer. Each RuvB hexamer is contacted by two RuvA subunits (via domain III) on 2 adjacent RuvB subunits; this complex drives branch migration. In the full resolvosome a probable DNA-RuvA(4)-RuvB(12)-RuvC(2) complex forms which resolves the HJ.

It localises to the cytoplasm. It carries out the reaction ATP + H2O = ADP + phosphate + H(+). In terms of biological role, the RuvA-RuvB-RuvC complex processes Holliday junction (HJ) DNA during genetic recombination and DNA repair, while the RuvA-RuvB complex plays an important role in the rescue of blocked DNA replication forks via replication fork reversal (RFR). RuvA specifically binds to HJ cruciform DNA, conferring on it an open structure. The RuvB hexamer acts as an ATP-dependent pump, pulling dsDNA into and through the RuvAB complex. RuvB forms 2 homohexamers on either side of HJ DNA bound by 1 or 2 RuvA tetramers; 4 subunits per hexamer contact DNA at a time. Coordinated motions by a converter formed by DNA-disengaged RuvB subunits stimulates ATP hydrolysis and nucleotide exchange. Immobilization of the converter enables RuvB to convert the ATP-contained energy into a lever motion, pulling 2 nucleotides of DNA out of the RuvA tetramer per ATP hydrolyzed, thus driving DNA branch migration. The RuvB motors rotate together with the DNA substrate, which together with the progressing nucleotide cycle form the mechanistic basis for DNA recombination by continuous HJ branch migration. Branch migration allows RuvC to scan DNA until it finds its consensus sequence, where it cleaves and resolves cruciform DNA. The protein is Holliday junction branch migration complex subunit RuvB of Shewanella sediminis (strain HAW-EB3).